The chain runs to 205 residues: High frequency lysogenization protein HflD homolog (205 aa).

It belongs to the HflD family.

The protein localises to the cytoplasm. It localises to the cell inner membrane. The sequence is that of High frequency lysogenization protein HflD homolog from Vibrio cholerae serotype O1 (strain ATCC 39541 / Classical Ogawa 395 / O395).